Here is an 808-residue protein sequence, read N- to C-terminus: MWFFARDPVRDFPFELIPEPPEGGLPGPWALHRGRKKATGSPVSIFVYDVKPGAEEQTQVAKAAFKRFKTLRHPNILAYIDGLETEKCLHVVTEAVTPLGIYLKARVEAGGLKELEISWGLHQIVKALSFLVNDCSLIHNNVCMAAVFVDRAGEWKLGGLDYMYSAQGNGGGPPRKGIPELEQYDPPELADSSGRVVREKWSADMWRLGCLIWEVFNGPLPRAAALRNPGKIPKTLVPHYCELVGANPKVRPNPARFLQNCRAPGGFMSNRFVETNLFLEEIQIKEPAEKQKFFQELSKSLDAFPEDFCRHKVLPQLLTAFEFGNAGAVVLTPLFKVGKFLSAEEYQQKIIPVVVKMFSSTDRAMRIRLLQQMEQFIQYLDEPTVNTQIFPHVVHGFLDTNPAIREQTVKSMLLLAPKLNEANLNVELMKHFARLQAKDEQGPIRCNTTVCLGKIGSYLSASTRHRVLTSAFSRATRDPFAPSRVAGVLGFAATHNLYSMNDCAQKILPVLCGLTVDPEKSVRDQAFKAIRSFLSKLESVSEDPTQLEEVEKDVHAASSPGMGGAAASWAGWAVTGVSSLTSKLIRSHPTTAPTETNIPQRPTPEGVPAPAPTPVPATPTTSGHWETQEEDKDTAEDSSTADRWDDEDWGSLEQEAESVLAQQDDWSTGGQVSRASQVSNSDHKSSKSPESDWSSWEAEGSWEQGWQEPSSQEPPPDGTRLASEYNWGGPESSDKGDPFATLSARPSTQPRPDSWGEDNWEGLETDSRQVKAELARKKREERRREMEAKRAERKVAKGPMKLGARKLD.

The Protein kinase domain occupies phenylalanine 14–leucine 314. HEAT repeat units lie at residues isoleucine 350–glutamine 388, isoleucine 389–glutamate 427, and isoleucine 507–threonine 545. 3 disordered regions span residues valine 540–alanine 566, serine 587–aspartate 646, and serine 658–aspartate 808. Over residues alanine 556–alanine 566 the composition is skewed to low complexity. Residues serine 587 to glutamine 600 are compositionally biased toward polar residues. Residues arginine 601 to alanine 617 are compositionally biased toward pro residues. Over residues leucine 660–asparagine 680 the composition is skewed to polar residues. A compositionally biased stretch (basic and acidic residues) spans serine 681–glutamate 690. Serine 754 is subject to Phosphoserine. A compositionally biased stretch (acidic residues) spans tryptophan 755–glutamate 764. Residues glutamate 761–lysine 797 are a coiled coil. Composition is skewed to basic and acidic residues over residues threonine 765 to alanine 775 and arginine 782 to valine 795. The interval arginine 793–aspartate 808 is interaction with COPB1.

The protein belongs to the protein kinase superfamily. Interacts with GORAB. Interacts with COPA, COPB1 and COPB2. Homooligomer. Interacts with AP2B1. As to expression, ubiquitous.

It localises to the cytoplasm. The protein resides in the cytoskeleton. Its subcellular location is the microtubule organizing center. The protein localises to the centrosome. It is found in the endoplasmic reticulum-Golgi intermediate compartment. It localises to the golgi apparatus. The protein resides in the cis-Golgi network. Its subcellular location is the nucleus. Regulates COPI-mediated retrograde protein traffic at the interface between the Golgi apparatus and the endoplasmic reticulum. Involved in the maintenance of the Golgi apparatus morphology. Functionally, acts as a transcriptional activator. It binds to three different types of GC-rich DNA binding sites (box-A, -B and -C) in the beta-polymerase promoter region. It also binds to the TERT promoter region. The polypeptide is N-terminal kinase-like protein (SCYL1) (Homo sapiens (Human)).